The primary structure comprises 185 residues: Photosystem I assembly protein Ycf4 (185 aa).

Transmembrane regions (helical) follow at residues 20 to 40 (GNFF…AVGA) and 57 to 77 (ILFF…LFIS).

The protein belongs to the Ycf4 family.

It localises to the plastid. The protein localises to the chloroplast thylakoid membrane. Seems to be required for the assembly of the photosystem I complex. The sequence is that of Photosystem I assembly protein Ycf4 from Oryza nivara (Indian wild rice).